The following is a 90-amino-acid chain: Trp-8 progonadoliberin (90 aa).

A signal peptide spans Met-1 to Gly-24. Gln-25 is subject to Pyrrolidone carboxylic acid. A Glycine amide modification is found at Gly-34.

The protein belongs to the GnRH family. In terms of tissue distribution, expressed in forebrain but not in testis, ovary, kidney and liver.

Its subcellular location is the secreted. Stimulates the secretion of gonadotropins. This is Trp-8 progonadoliberin from Rana dybowskii (Dybovsky's frog).